Here is a 115-residue protein sequence, read N- to C-terminus: Large ribosomal subunit protein bL19 (115 aa).

Belongs to the bacterial ribosomal protein bL19 family.

Functionally, this protein is located at the 30S-50S ribosomal subunit interface and may play a role in the structure and function of the aminoacyl-tRNA binding site. The protein is Large ribosomal subunit protein bL19 of Streptococcus equi subsp. equi (strain 4047).